The chain runs to 181 residues: Adenine phosphoribosyltransferase (181 aa).

This sequence belongs to the purine/pyrimidine phosphoribosyltransferase family. Homodimer.

It localises to the cytoplasm. The catalysed reaction is AMP + diphosphate = 5-phospho-alpha-D-ribose 1-diphosphate + adenine. It functions in the pathway purine metabolism; AMP biosynthesis via salvage pathway; AMP from adenine: step 1/1. In terms of biological role, catalyzes a salvage reaction resulting in the formation of AMP, that is energically less costly than de novo synthesis. The chain is Adenine phosphoribosyltransferase from Mesorhizobium japonicum (strain LMG 29417 / CECT 9101 / MAFF 303099) (Mesorhizobium loti (strain MAFF 303099)).